We begin with the raw amino-acid sequence, 226 residues long: Large ribosomal subunit protein uL1 (226 aa).

Belongs to the universal ribosomal protein uL1 family. Part of the 50S ribosomal subunit.

Binds directly to 23S rRNA. The L1 stalk is quite mobile in the ribosome, and is involved in E site tRNA release. Its function is as follows. Protein L1 is also a translational repressor protein, it controls the translation of the L11 operon by binding to its mRNA. This is Large ribosomal subunit protein uL1 from Mycoplasma capricolum subsp. capricolum (strain California kid / ATCC 27343 / NCTC 10154).